The primary structure comprises 349 residues: Dihydroorotate dehydrogenase (quinone) (349 aa).

FMN contacts are provided by residues Pro59 to Lys63 and Thr83. Residue Lys63 coordinates substrate. Position 108-112 (Asn108–Phe112) interacts with substrate. FMN contacts are provided by Asn142 and Asn173. Asn173 contributes to the substrate binding site. Catalysis depends on Ser176, which acts as the Nucleophile. Residue Asn178 participates in substrate binding. FMN-binding residues include Lys212 and Ser240. Residue Asn241 to Thr242 participates in substrate binding. Residues Gly262, Gly291, and Tyr312 to Ser313 each bind FMN.

This sequence belongs to the dihydroorotate dehydrogenase family. Type 2 subfamily. As to quaternary structure, monomer. It depends on FMN as a cofactor.

Its subcellular location is the cell membrane. It catalyses the reaction (S)-dihydroorotate + a quinone = orotate + a quinol. The protein operates within pyrimidine metabolism; UMP biosynthesis via de novo pathway; orotate from (S)-dihydroorotate (quinone route): step 1/1. Catalyzes the conversion of dihydroorotate to orotate with quinone as electron acceptor. The sequence is that of Dihydroorotate dehydrogenase (quinone) from Novosphingobium aromaticivorans (strain ATCC 700278 / DSM 12444 / CCUG 56034 / CIP 105152 / NBRC 16084 / F199).